Consider the following 542-residue polypeptide: Chaperonin GroEL 3 (542 aa).

Residues T29–P32, D86–T90, G413, N477–A479, and D493 contribute to the ATP site.

This sequence belongs to the chaperonin (HSP60) family. Forms a cylinder of 14 subunits composed of two heptameric rings stacked back-to-back. Interacts with the co-chaperonin GroES.

Its subcellular location is the cytoplasm. The enzyme catalyses ATP + H2O + a folded polypeptide = ADP + phosphate + an unfolded polypeptide.. Together with its co-chaperonin GroES, plays an essential role in assisting protein folding. The GroEL-GroES system forms a nano-cage that allows encapsulation of the non-native substrate proteins and provides a physical environment optimized to promote and accelerate protein folding. In Frankia alni (strain DSM 45986 / CECT 9034 / ACN14a), this protein is Chaperonin GroEL 3.